An 803-amino-acid chain; its full sequence is Sensor histidine kinase CheAY (803 aa).

Position 47 is a phosphohistidine (His-47). Disordered regions lie at residues 134–185 and 209–255; these read LESA…DEPD and EADK…ENKA. Composition is skewed to basic and acidic residues over residues 136 to 166, 209 to 226, and 233 to 254; these read SAKERTTEAPQKENKEETKEEAKEENKENKA, EADKERRAQKKQEAKPKQ, and ETPKAPKTETKAKAKADTEENK. One can recognise a Histidine kinase domain in the interval 270-517; that stretch reads RLDHLMNLIG…TQKLKIPLTL (248 aa). Residue His-273 is modified to Phosphohistidine; by autocatalysis. The 135-residue stretch at 519–653 folds into the CheW-like domain; it reads IIQALLVGVQ…VGAMMDMAKS (135 aa). The Response regulatory domain maps to 678 to 796; that stretch reads IVLAIDDSST…YLTTVVKRSI (119 aa). Position 729 is a 4-aspartylphosphate (Asp-729).

Post-translationally, autophosphorylated.

The enzyme catalyses ATP + protein L-histidine = ADP + protein N-phospho-L-histidine.. Member of the two-component regulatory system CheAY/CheY that regulates chemotaxis and colonization of the gastric mucosa. Functions as a sensor protein kinase which is autophosphorylated at a histidine residue and transfers its phosphate group to the conserved aspartic acid residue in the regulatory domain of CheY. In turn, phosphorylated CheY (CheY-P) interacts with the flagellar motor protein FliM to cause clockwise flagellar rotation and bacterial reversals, as opposed to straight swimming when CheY is not phosphorylated. This Helicobacter pylori (strain ATCC 700392 / 26695) (Campylobacter pylori) protein is Sensor histidine kinase CheAY (cheAY).